A 142-amino-acid chain; its full sequence is MVLSPADKTNVKATWDKIGGHAGEYGGEALERTFASFPTTKTYFPHFDLSPGSAQVKAHGKKVADALTTAVGHLDDLPGALSALSDLHAHKLRVDPVNFKLLSHCLLVTLASHHPAEFTPAVHASLDKFFSAVSTVLTSKYR.

A Globin domain is found at 2–142; that stretch reads VLSPADKTNV…VSTVLTSKYR (141 aa). A Phosphoserine modification is found at Ser-4. N6-succinyllysine is present on Lys-8. The residue at position 9 (Thr-9) is a Phosphothreonine. The residue at position 12 (Lys-12) is an N6-succinyllysine. Position 17 is an N6-acetyllysine; alternate (Lys-17). Lys-17 is subject to N6-succinyllysine; alternate. Position 25 is a phosphotyrosine (Tyr-25). The residue at position 36 (Ser-36) is a Phosphoserine. At Lys-41 the chain carries N6-succinyllysine. Ser-50 carries the post-translational modification Phosphoserine. O2 is bound at residue His-59. Heme b is bound at residue His-88. The residue at position 103 (Ser-103) is a Phosphoserine. Thr-109 is subject to Phosphothreonine. Phosphoserine is present on Ser-125. Residues Thr-135 and Thr-138 each carry the phosphothreonine modification. Ser-139 bears the Phosphoserine mark.

The protein belongs to the globin family. In terms of assembly, heterotetramer of two alpha chains and two beta chains. As to expression, red blood cells.

Involved in oxygen transport from the lung to the various peripheral tissues. Its function is as follows. Hemopressin acts as an antagonist peptide of the cannabinoid receptor CNR1. Hemopressin-binding efficiently blocks cannabinoid receptor CNR1 and subsequent signaling. The sequence is that of Hemoglobin subunit alpha (HBA) from Ailuropoda melanoleuca (Giant panda).